Here is a 171-residue protein sequence, read N- to C-terminus: uncharacterized protein (171 aa).

This is an uncharacterized protein from Haemophilus influenzae (strain ATCC 51907 / DSM 11121 / KW20 / Rd).